A 645-amino-acid polypeptide reads, in one-letter code: DNA mismatch repair protein MutL (645 aa).

This sequence belongs to the DNA mismatch repair MutL/HexB family.

Functionally, this protein is involved in the repair of mismatches in DNA. It is required for dam-dependent methyl-directed DNA mismatch repair. May act as a 'molecular matchmaker', a protein that promotes the formation of a stable complex between two or more DNA-binding proteins in an ATP-dependent manner without itself being part of a final effector complex. In Geobacillus thermodenitrificans (strain NG80-2), this protein is DNA mismatch repair protein MutL.